The primary structure comprises 166 residues: Protein E6 (166 aa).

2 zinc fingers span residues 50-86 (CNFC…CRWC) and 123-159 (CQNC…CRLC).

It belongs to the papillomaviridae E6 protein family. Forms homodimers. Interacts with ubiquitin-protein ligase UBE3A/E6-AP; this interaction stimulates UBE3A ubiquitin activity. Interacts with host BAK1.

The protein resides in the host cytoplasm. It localises to the host nucleus. Its function is as follows. Plays a major role in the induction and maintenance of cellular transformation. E6 associates with host UBE3A/E6-AP ubiquitin-protein ligase and modulates its activity. Protects host keratinocytes from apoptosis by mediating the degradation of host BAK1. May also inhibit host immune response. In Homo sapiens (Human), this protein is Protein E6.